Here is a 117-residue protein sequence, read N- to C-terminus: Prefoldin subunit beta (117 aa).

Belongs to the prefoldin subunit beta family. Heterohexamer of two alpha and four beta subunits.

It is found in the cytoplasm. In terms of biological role, molecular chaperone capable of stabilizing a range of proteins. Seems to fulfill an ATP-independent, HSP70-like function in archaeal de novo protein folding. This Pyrococcus abyssi (strain GE5 / Orsay) protein is Prefoldin subunit beta (pfdB).